Here is a 177-residue protein sequence, read N- to C-terminus: NADH-quinone oxidoreductase subunit B (177 aa).

Cys56, Cys57, Cys121, and Cys151 together coordinate [4Fe-4S] cluster.

This sequence belongs to the complex I 20 kDa subunit family. NDH-1 is composed of 14 different subunits. Subunits NuoB, C, D, E, F, and G constitute the peripheral sector of the complex. The cofactor is [4Fe-4S] cluster.

It is found in the cell inner membrane. The catalysed reaction is a quinone + NADH + 5 H(+)(in) = a quinol + NAD(+) + 4 H(+)(out). Its function is as follows. NDH-1 shuttles electrons from NADH, via FMN and iron-sulfur (Fe-S) centers, to quinones in the respiratory chain. The immediate electron acceptor for the enzyme in this species is believed to be ubiquinone. Couples the redox reaction to proton translocation (for every two electrons transferred, four hydrogen ions are translocated across the cytoplasmic membrane), and thus conserves the redox energy in a proton gradient. The protein is NADH-quinone oxidoreductase subunit B of Rhodobacter capsulatus (Rhodopseudomonas capsulata).